Reading from the N-terminus, the 78-residue chain is Acyl carrier protein (78 aa).

The Carrier domain occupies 2–77 (SDIAERVKKI…DAIKFLEKNA (76 aa)). The residue at position 37 (Ser37) is an O-(pantetheine 4'-phosphoryl)serine.

Belongs to the acyl carrier protein (ACP) family. In terms of processing, 4'-phosphopantetheine is transferred from CoA to a specific serine of apo-ACP by AcpS. This modification is essential for activity because fatty acids are bound in thioester linkage to the sulfhydryl of the prosthetic group.

It localises to the cytoplasm. The protein operates within lipid metabolism; fatty acid biosynthesis. Carrier of the growing fatty acid chain in fatty acid biosynthesis. This chain is Acyl carrier protein, found in Azorhizobium caulinodans (strain ATCC 43989 / DSM 5975 / JCM 20966 / LMG 6465 / NBRC 14845 / NCIMB 13405 / ORS 571).